Reading from the N-terminus, the 470-residue chain is 3-oxo-isoapionate kinase (470 aa).

D30 and R78 together coordinate substrate. ATP-binding positions include S291, 403–406 (GGDS), and G451.

The protein belongs to the four-carbon acid sugar kinase family.

It catalyses the reaction 3-oxoisoapionate + ATP = 3-oxoisoapionate 4-phosphate + ADP + H(+). It functions in the pathway carbohydrate metabolism. Its function is as follows. Involved in catabolism of D-apiose. Catalyzes the phosphorylation of 3-oxo-isoapionate to 3-oxo-isoapionate 4-phosphate. The chain is 3-oxo-isoapionate kinase from Paraburkholderia graminis (strain ATCC 700544 / DSM 17151 / LMG 18924 / NCIMB 13744 / C4D1M).